Reading from the N-terminus, the 364-residue chain is WAT1-related protein At5g47470 (364 aa).

The next 10 helical transmembrane spans lie at 28 to 48 (MVIV…SLLM), 59 to 79 (FTIV…FAIL), 93 to 113 (LIGK…SLFL), 124 to 144 (ATAM…IVGL), 158 to 178 (ILGT…HSTS), 197 to 217 (VVGC…VVLQ), 228 to 248 (ISLS…VLLL), 255 to 275 (VLAS…LAGA), 293 to 313 (PVFV…FAVL), and 319 to 339 (VSLG…LVLW). The region spanning 40-172 (VYAGNSLLMS…LCVFGALAMS (133 aa)) is the EamA 1 domain. The region spanning 219–338 (STLAEFPAPI…LMFVGLYLVL (120 aa)) is the EamA 2 domain.

Belongs to the drug/metabolite transporter (DMT) superfamily. Plant drug/metabolite exporter (P-DME) (TC 2.A.7.4) family.

Its subcellular location is the membrane. This Arabidopsis thaliana (Mouse-ear cress) protein is WAT1-related protein At5g47470.